We begin with the raw amino-acid sequence, 704 residues long: Nucleolar and coiled-body phosphoprotein 1 (704 aa).

The LisH domain occupies 10–42 (VPSDLYPLVLGFLRDNQLSEVASKFAKATGATQ). The residue at position 33 (K33) is an N6-acetyllysine. Residues 65 to 638 (KVKLQSNGPV…PFRRVREEEI (574 aa)) are disordered. Glycyl lysine isopeptide (Lys-Gly) (interchain with G-Cter in SUMO2) cross-links involve residues K67 and K76. Acidic serine cluster repeat units lie at residues 84 to 95 (SSDSSEDSSEEE) and 127 to 138 (ESSSSEESSEEE). The 11 X 12 AA approximate repeats of an acidic serine cluster stretch occupies residues 84 to 570 (SSDSSEDSSE…GKAGKESEEE (487 aa)). A phosphoserine mark is found at S87, S88, S91, and S92. The span at 87-96 (SSEDSSEEED) shows a compositional bias: acidic residues. 2 positions are modified to diphosphoserine: S88 and S91. Low complexity-rich tracts occupy residues 120 to 132 (KAAA…SSSE) and 149 to 160 (QQKAVKPQAKAV). Residues 170–181 (SESESDSSSEDE) form an Acidic serine cluster 3 repeat. Residues 170–182 (SESESDSSSEDEA) are compositionally biased toward acidic residues. Low complexity-rich tracts occupy residues 183–207 (PQTQ…KAPA), 215–236 (AQPK…SSSS), and 246–279 (AAPL…SSED). Glycyl lysine isopeptide (Lys-Gly) (interchain with G-Cter in SUMO2) cross-links involve residues K189 and K200. Acidic serine cluster repeat units lie at residues 231 to 242 (SSSSSSDDSEEE), 274 to 285 (SSSSEDSSSEEE), and 335 to 346 (SSEESDSSSEEE). Residues K352 and K357 each participate in a glycyl lysine isopeptide (Lys-Gly) (interchain with G-Cter in SUMO2) cross-link. S372, S373, and S376 each carry phosphoserine. One copy of the Acidic serine cluster 7 repeat lies at 373–384 (SDSSDSDSSEDE). Glycyl lysine isopeptide (Lys-Gly) (interchain with G-Cter in SUMO2) cross-links involve residues K399, K405, K410, and K416. Low complexity predominate over residues 408 to 419 (AAKAVATPKQPA). N6-acetyllysine; alternate is present on K424. A Glycyl lysine isopeptide (Lys-Gly) (interchain with G-Cter in SUMO1); alternate cross-link involves residue K424. K424 participates in a covalent cross-link: Glycyl lysine isopeptide (Lys-Gly) (interchain with G-Cter in SUMO2); alternate. Residues 434-444 (SSEEESSSSEE) are compositionally biased toward acidic residues. The stretch at 434-445 (SSEEESSSSEEE) is one Acidic serine cluster 8 repeat. Residues K449 and K461 each participate in a glycyl lysine isopeptide (Lys-Gly) (interchain with G-Cter in SUMO2) cross-link. Residue S465 is modified to Phosphoserine. Composition is skewed to low complexity over residues 474-485 (AGGDSSSDSESS) and 504-529 (AGAA…SSSE). The stretch at 479 to 490 (SSDSESSSSEEE) is one Acidic serine cluster 9 repeat. K510 participates in a covalent cross-link: Glycyl lysine isopeptide (Lys-Gly) (interchain with G-Cter in SUMO2). Acidic serine cluster repeat units lie at residues 524–535 (SSSSSEDSSEEE) and 559–570 (QNGKAGKESEEE). Position 567 is a phosphoserine (S567). K584 participates in a covalent cross-link: Glycyl lysine isopeptide (Lys-Gly) (interchain with G-Cter in SUMO2). S587 is modified (phosphoserine). T596 is subject to Phosphothreonine. K609 is covalently cross-linked (Glycyl lysine isopeptide (Lys-Gly) (interchain with G-Cter in SUMO2)). Phosphothreonine is present on residues T612 and T615. K618 participates in a covalent cross-link: Glycyl lysine isopeptide (Lys-Gly) (interchain with G-Cter in SUMO2). S627 and S648 each carry phosphoserine. Residue K652 forms a Glycyl lysine isopeptide (Lys-Gly) (interchain with G-Cter in SUMO2) linkage. N6-acetyllysine; alternate is present on K668. Residue K668 forms a Glycyl lysine isopeptide (Lys-Gly) (interchain with G-Cter in SUMO2); alternate linkage. The residue at position 688 (R688) is an Omega-N-methylarginine. S691 carries the post-translational modification Phosphoserine. A Glycyl lysine isopeptide (Lys-Gly) (interchain with G-Cter in SUMO2) cross-link involves residue K700. S703 carries the post-translational modification Phosphoserine.

The protein belongs to the NOLC1 family. As to quaternary structure, interacts with RNA polymerase I 194 kDa subunit (RPA194) and with casein kinase-II. Interacts with DKC1/NAP57, NOP58 and fibrillarin. Undergoes rapid and massive phosphorylation/dephosphorylation cycles on CK2 and PKC sites. NOLC1 is one of the mostly phosphorylated proteins in the cell. In terms of processing, ubiquitinated. Monoubiquitination by the BCR(KBTBD8) complex promotes the formation of a NOLC1-TCOF1 complex that acts as a platform to connect RNA polymerase I with enzymes responsible for ribosomal processing and modification, leading to remodel the translational program of differentiating cells in favor of neural crest specification. Post-translationally, pyrophosphorylated by 5-diphosphoinositol pentakisphosphate (5-IP7). Serine pyrophosphorylation is achieved by Mg(2+)-dependent, but enzyme independent transfer of a beta-phosphate from a inositol pyrophosphate to a pre-phosphorylated serine residue.

It localises to the cytoplasm. Its subcellular location is the nucleus. The protein resides in the nucleolus. Nucleolar protein that acts as a regulator of RNA polymerase I by connecting RNA polymerase I with enzymes responsible for ribosomal processing and modification. Required for neural crest specification: following monoubiquitination by the BCR(KBTBD8) complex, associates with TCOF1 and acts as a platform to connect RNA polymerase I with enzymes responsible for ribosomal processing and modification, leading to remodel the translational program of differentiating cells in favor of neural crest specification. Involved in nucleologenesis, possibly by playing a role in the maintenance of the fundamental structure of the fibrillar center and dense fibrillar component in the nucleolus. It has intrinsic GTPase and ATPase activities. The sequence is that of Nucleolar and coiled-body phosphoprotein 1 from Rattus norvegicus (Rat).